We begin with the raw amino-acid sequence, 180 residues long: ATP synthase subunit delta (180 aa).

It belongs to the ATPase delta chain family. As to quaternary structure, F-type ATPases have 2 components, F(1) - the catalytic core - and F(0) - the membrane proton channel. F(1) has five subunits: alpha(3), beta(3), gamma(1), delta(1), epsilon(1). F(0) has three main subunits: a(1), b(2) and c(10-14). The alpha and beta chains form an alternating ring which encloses part of the gamma chain. F(1) is attached to F(0) by a central stalk formed by the gamma and epsilon chains, while a peripheral stalk is formed by the delta and b chains.

The protein resides in the cell inner membrane. In terms of biological role, f(1)F(0) ATP synthase produces ATP from ADP in the presence of a proton or sodium gradient. F-type ATPases consist of two structural domains, F(1) containing the extramembraneous catalytic core and F(0) containing the membrane proton channel, linked together by a central stalk and a peripheral stalk. During catalysis, ATP synthesis in the catalytic domain of F(1) is coupled via a rotary mechanism of the central stalk subunits to proton translocation. This protein is part of the stalk that links CF(0) to CF(1). It either transmits conformational changes from CF(0) to CF(1) or is implicated in proton conduction. The protein is ATP synthase subunit delta of Pelobacter propionicus (strain DSM 2379 / NBRC 103807 / OttBd1).